The sequence spans 78 residues: MMAAPRRPFFRRRKTCPFSGAGAPKIDYKDIKLLLRFVSERGKIVPSRITAVSAKKQRELARAIKRARFLSLLPYVLK.

It belongs to the bacterial ribosomal protein bS18 family. As to quaternary structure, part of the 30S ribosomal subunit. Forms a tight heterodimer with protein bS6.

In terms of biological role, binds as a heterodimer with protein bS6 to the central domain of the 16S rRNA, where it helps stabilize the platform of the 30S subunit. The sequence is that of Small ribosomal subunit protein bS18 from Rhodospirillum rubrum (strain ATCC 11170 / ATH 1.1.1 / DSM 467 / LMG 4362 / NCIMB 8255 / S1).